We begin with the raw amino-acid sequence, 75 residues long: UPF0270 protein PST_1436 (75 aa).

This sequence belongs to the UPF0270 family.

This chain is UPF0270 protein PST_1436, found in Stutzerimonas stutzeri (strain A1501) (Pseudomonas stutzeri).